The chain runs to 295 residues: MTPSTEALPTAVKAQVLAEALPWLKQLHGKIVVIKYGGNAMTDDTLRRAFAADMAFLRNCGIHPVVVHGGGPQITAMLRRLGIPGDFKGGFRVTTPEVLDVARMVLFGQVGRELVNLINAHGPYAVGITGEDAQLFTAVRRSVTVDGVTTDIGLVGDVERVNAAAVLDLIAARRIPVVSTLAPDAEGVVHNINADTAAAALAEALGAEKLLMLTDVEGLYTSWPNRDSLVSEIDTATLSQLLPTLEAGMIPKVEACLRAVSAGVPSAHVIDGRVEHCVLVELFTDAGTGTKVVSS.

Residues 70 to 71 (GG), arginine 92, and asparagine 191 contribute to the substrate site.

The protein belongs to the acetylglutamate kinase family. ArgB subfamily.

It localises to the cytoplasm. The enzyme catalyses N-acetyl-L-glutamate + ATP = N-acetyl-L-glutamyl 5-phosphate + ADP. It participates in amino-acid biosynthesis; L-arginine biosynthesis; N(2)-acetyl-L-ornithine from L-glutamate: step 2/4. In terms of biological role, catalyzes the ATP-dependent phosphorylation of N-acetyl-L-glutamate. The chain is Acetylglutamate kinase from Mycobacterium avium (strain 104).